The following is a 425-amino-acid chain: Kynureninase (425 aa).

Residues L105, T106, 133-136 (FPSD), D218, H221, and Y243 contribute to the pyridoxal 5'-phosphate site. The residue at position 244 (K244) is an N6-(pyridoxal phosphate)lysine. Residues W274 and N302 each coordinate pyridoxal 5'-phosphate.

Belongs to the kynureninase family. Homodimer. The cofactor is pyridoxal 5'-phosphate.

The catalysed reaction is L-kynurenine + H2O = anthranilate + L-alanine + H(+). It carries out the reaction 3-hydroxy-L-kynurenine + H2O = 3-hydroxyanthranilate + L-alanine + H(+). The protein operates within amino-acid degradation; L-kynurenine degradation; L-alanine and anthranilate from L-kynurenine: step 1/1. It functions in the pathway cofactor biosynthesis; NAD(+) biosynthesis; quinolinate from L-kynurenine: step 2/3. Its function is as follows. Catalyzes the cleavage of L-kynurenine (L-Kyn) and L-3-hydroxykynurenine (L-3OHKyn) into anthranilic acid (AA) and 3-hydroxyanthranilic acid (3-OHAA), respectively. In Flavobacterium johnsoniae (strain ATCC 17061 / DSM 2064 / JCM 8514 / BCRC 14874 / CCUG 350202 / NBRC 14942 / NCIMB 11054 / UW101) (Cytophaga johnsonae), this protein is Kynureninase.